The primary structure comprises 315 residues: Small ribosomal subunit protein mS45 (315 aa).

The transit peptide at 1–66 (MRNSVEFSQL…SKYVACNSRS (66 aa)) directs the protein to the mitochondrion.

This sequence belongs to the mitochondrion-specific ribosomal protein mS45 family. As to quaternary structure, component of the mitochondrial small ribosomal subunit (mt-SSU). Mature yeast 74S mitochondrial ribosomes consist of a small (37S) and a large (54S) subunit. The 37S small subunit contains a 15S ribosomal RNA (15S mt-rRNA) and at least 32 different proteins. The 54S large subunit contains a 21S rRNA (21S mt-rRNA) and at least 45 different proteins.

It is found in the mitochondrion. Its function is as follows. Component of the mitochondrial ribosome (mitoribosome), a dedicated translation machinery responsible for the synthesis of mitochondrial genome-encoded proteins, including at least some of the essential transmembrane subunits of the mitochondrial respiratory chain. The mitoribosomes are attached to the mitochondrial inner membrane and translation products are cotranslationally integrated into the membrane. Required for mitochondrial protein synthesis. Has a role in mitochondrial integrity and cell respiration. In Schizosaccharomyces pombe (strain 972 / ATCC 24843) (Fission yeast), this protein is Small ribosomal subunit protein mS45 (bot1).